A 199-amino-acid polypeptide reads, in one-letter code: Shikimate kinase (199 aa).

Residue 14–19 (GSGKST) coordinates ATP. Ser18 serves as a coordination point for Mg(2+). The substrate site is built by Asp36, Arg60, and Gly82. ATP is bound at residue Arg120. Position 147 (Arg147) interacts with substrate.

It belongs to the shikimate kinase family. Monomer. It depends on Mg(2+) as a cofactor.

It is found in the cytoplasm. The enzyme catalyses shikimate + ATP = 3-phosphoshikimate + ADP + H(+). It participates in metabolic intermediate biosynthesis; chorismate biosynthesis; chorismate from D-erythrose 4-phosphate and phosphoenolpyruvate: step 5/7. Functionally, catalyzes the specific phosphorylation of the 3-hydroxyl group of shikimic acid using ATP as a cosubstrate. The protein is Shikimate kinase of Chlorobium limicola (strain DSM 245 / NBRC 103803 / 6330).